The primary structure comprises 421 residues: Serine--tRNA ligase (421 aa).

L-serine is bound at residue Thr-225–Glu-227. Residues Arg-256–Glu-258 and Val-272 each bind ATP. Glu-279 serves as a coordination point for L-serine. Glu-345–Ser-348 contacts ATP. Residue Thr-380 coordinates L-serine.

Belongs to the class-II aminoacyl-tRNA synthetase family. Type-1 seryl-tRNA synthetase subfamily. As to quaternary structure, homodimer. The tRNA molecule binds across the dimer.

It localises to the cytoplasm. It catalyses the reaction tRNA(Ser) + L-serine + ATP = L-seryl-tRNA(Ser) + AMP + diphosphate + H(+). The enzyme catalyses tRNA(Sec) + L-serine + ATP = L-seryl-tRNA(Sec) + AMP + diphosphate + H(+). Its pathway is aminoacyl-tRNA biosynthesis; selenocysteinyl-tRNA(Sec) biosynthesis; L-seryl-tRNA(Sec) from L-serine and tRNA(Sec): step 1/1. Functionally, catalyzes the attachment of serine to tRNA(Ser). Is also able to aminoacylate tRNA(Sec) with serine, to form the misacylated tRNA L-seryl-tRNA(Sec), which will be further converted into selenocysteinyl-tRNA(Sec). In Thermus thermophilus (strain ATCC 27634 / DSM 579 / HB8), this protein is Serine--tRNA ligase.